Here is a 417-residue protein sequence, read N- to C-terminus: Glutamyl-tRNA reductase (417 aa).

Residues 49–52, S105, 110–112, and Q116 contribute to the substrate site; these read TCNR and EPQ. Residue C50 is the Nucleophile of the active site. Residue 185–190 coordinates NADP(+); sequence GAGEMI.

It belongs to the glutamyl-tRNA reductase family. As to quaternary structure, homodimer.

The catalysed reaction is (S)-4-amino-5-oxopentanoate + tRNA(Glu) + NADP(+) = L-glutamyl-tRNA(Glu) + NADPH + H(+). It participates in porphyrin-containing compound metabolism; protoporphyrin-IX biosynthesis; 5-aminolevulinate from L-glutamyl-tRNA(Glu): step 1/2. Catalyzes the NADPH-dependent reduction of glutamyl-tRNA(Glu) to glutamate 1-semialdehyde (GSA). The protein is Glutamyl-tRNA reductase of Azoarcus sp. (strain BH72).